Consider the following 143-residue polypeptide: Hemoglobin subunit alpha-1 (143 aa).

The residue at position 2 (Ser-2) is an N-acetylserine. The 142-residue stretch at 2–143 (SLSTKDKETV…VSLALAEKYR (142 aa)) folds into the Globin domain. His-60 lines the O2 pocket. His-89 contributes to the heme b binding site.

Belongs to the globin family. Hb1 is a heterotetramer of two alpha-1 chains and two beta-1 chains. As to expression, red blood cells.

Its function is as follows. Involved in oxygen transport from gills to the various peripheral tissues. In Liparis tunicatus (Kelp snailfish), this protein is Hemoglobin subunit alpha-1.